Here is a 40-residue protein sequence, read N- to C-terminus: Photosystem II reaction center protein J (40 aa).

A helical membrane pass occupies residues Ile-8 to Phe-28.

This sequence belongs to the PsbJ family. As to quaternary structure, PSII is composed of 1 copy each of membrane proteins PsbA, PsbB, PsbC, PsbD, PsbE, PsbF, PsbH, PsbI, PsbJ, PsbK, PsbL, PsbM, PsbT, PsbX, PsbY, PsbZ, Psb30/Ycf12, peripheral proteins PsbO, CyanoQ (PsbQ), PsbU, PsbV and a large number of cofactors. It forms dimeric complexes.

The protein resides in the cellular thylakoid membrane. Functionally, one of the components of the core complex of photosystem II (PSII). PSII is a light-driven water:plastoquinone oxidoreductase that uses light energy to abstract electrons from H(2)O, generating O(2) and a proton gradient subsequently used for ATP formation. It consists of a core antenna complex that captures photons, and an electron transfer chain that converts photonic excitation into a charge separation. This is Photosystem II reaction center protein J from Trichodesmium erythraeum (strain IMS101).